Reading from the N-terminus, the 609-residue chain is Proteasome-associated ATPase (609 aa).

The tract at residues 1–22 is disordered; that stretch reads MGESERSEAFNPPREAGMSSGD. Residues 20-96 are a coiled coil; sequence SGDIAELEQL…LREEVDRLGQ (77 aa). 296 to 301 serves as a coordination point for ATP; the sequence is GCGKTL. The interval 608–609 is docks into pockets in the proteasome alpha-ring; it reads YL.

It belongs to the AAA ATPase family. As to quaternary structure, homohexamer. Assembles into a hexameric ring structure that caps the 20S proteasome core. Strongly interacts with the prokaryotic ubiquitin-like protein Pup through a hydrophobic interface; the interacting region of ARC lies in its N-terminal coiled-coil domain. There is one Pup binding site per ARC hexamer ring. Upon ATP-binding, the C-terminus of ARC interacts with the alpha-rings of the proteasome core, possibly by binding to the intersubunit pockets.

The protein operates within protein degradation; proteasomal Pup-dependent pathway. Functionally, ATPase which is responsible for recognizing, binding, unfolding and translocation of pupylated proteins into the bacterial 20S proteasome core particle. May be essential for opening the gate of the 20S proteasome via an interaction with its C-terminus, thereby allowing substrate entry and access to the site of proteolysis. Thus, the C-termini of the proteasomal ATPase may function like a 'key in a lock' to induce gate opening and therefore regulate proteolysis. In Mycobacterium leprae (strain Br4923), this protein is Proteasome-associated ATPase.